A 106-amino-acid polypeptide reads, in one-letter code: P4 prophage-derived uncharacterized protein t2655 (106 aa).

The chain is P4 prophage-derived uncharacterized protein t2655 from Salmonella typhi.